A 429-amino-acid chain; its full sequence is RNA-binding protein BRN2 (429 aa).

3 RRM domains span residues 12 to 93 (VKLF…YADG), 100 to 180 (HKLF…WADT), and 330 to 408 (ANLF…LKRD). The tract at residues 410–429 (GQQQQQQQSKNPLFNGLLNS) is disordered. The span at 418–429 (SKNPLFNGLLNS) shows a compositional bias: polar residues.

As to expression, expressed in roots, stems, flowers and siliques.

It localises to the cytoplasm. Its function is as follows. RNA-binding protein involved in the regulation of flowering time. Acts as a repressor of the activity of SOC1, a transcriptional activator of flowering time. Binds to the 3'-UTR of SOC1 mRNA in the cytoplasm and participates in SOC1 mRNA decay, mediated by the distal region of the SOC1 3'-UTR. The protein is RNA-binding protein BRN2 of Arabidopsis thaliana (Mouse-ear cress).